A 373-amino-acid polypeptide reads, in one-letter code: MSINEIIIYLMVIFMILGAIDKIIGNKFGLGAQFEEGIMAMGSLTLAMVGIITLAPVLAKILSPIVVPIYTALGADPAMFATTLLANDMGGFALAQELALTPDAGLFAGAILGSMMGPTIVFTIPVALGIIKKEDHKYLATGVLSGIITIPIGCLIGGLVAGFSPIMIFKNLVPIILVAALIMLGLWFKPEGMIKGFTIFGKGVVIVATIGLVAGAIQQLTGLTIIPGIAPIGEGIEIVGGIALVLAGAFCLVFVITKVFNKPLMKMGKLLGMNEVAAAGMVATLANSIPMFQMLKDMDERGKIINVAFAVSAAFVLGDHLGFTAGVAQDMIFPMIVGKLVGGVTAVAVGIYMANRMMKKNKAKEQTAVKDNG.

Transmembrane regions (helical) follow at residues 5–25 (EIII…KIIG), 38–58 (IMAM…APVL), 61–81 (ILSP…AMFA), 111–131 (ILGS…LGII), 143–163 (VLSG…VAGF), 166–186 (IMIF…MLGL), 197–217 (FTIF…AGAI), 236–256 (IEIV…VFVI), 307–327 (VAFA…TAGV), and 331–351 (MIFP…AVGI).

It belongs to the EutH family.

It is found in the cell membrane. It carries out the reaction ethanolamine(in) = ethanolamine(out). Probably involved in the diffusion of protonated ethanolamine (EA) into the cell at low pH. At low pH most EA is protonated, and this permease becomes necessary. Contributes to bacterial survival and replication in acidic macrophage vacuoles, but not to bacterial uptake by macrophages. The polypeptide is Probable ethanolamine permease EutH (Listeria monocytogenes serotype 1/2a (strain 10403S)).